The chain runs to 261 residues: Imidazole glycerol phosphate synthase subunit HisF (261 aa).

Active-site residues include Asp16 and Asp135.

It belongs to the HisA/HisF family. Heterodimer of HisH and HisF.

The protein resides in the cytoplasm. The enzyme catalyses 5-[(5-phospho-1-deoxy-D-ribulos-1-ylimino)methylamino]-1-(5-phospho-beta-D-ribosyl)imidazole-4-carboxamide + L-glutamine = D-erythro-1-(imidazol-4-yl)glycerol 3-phosphate + 5-amino-1-(5-phospho-beta-D-ribosyl)imidazole-4-carboxamide + L-glutamate + H(+). The protein operates within amino-acid biosynthesis; L-histidine biosynthesis; L-histidine from 5-phospho-alpha-D-ribose 1-diphosphate: step 5/9. Functionally, IGPS catalyzes the conversion of PRFAR and glutamine to IGP, AICAR and glutamate. The HisF subunit catalyzes the cyclization activity that produces IGP and AICAR from PRFAR using the ammonia provided by the HisH subunit. The protein is Imidazole glycerol phosphate synthase subunit HisF of Mycobacterium marinum (strain ATCC BAA-535 / M).